We begin with the raw amino-acid sequence, 570 residues long: Proline--tRNA ligase (570 aa).

This sequence belongs to the class-II aminoacyl-tRNA synthetase family. ProS type 1 subfamily. As to quaternary structure, homodimer.

It localises to the cytoplasm. The catalysed reaction is tRNA(Pro) + L-proline + ATP = L-prolyl-tRNA(Pro) + AMP + diphosphate. Catalyzes the attachment of proline to tRNA(Pro) in a two-step reaction: proline is first activated by ATP to form Pro-AMP and then transferred to the acceptor end of tRNA(Pro). As ProRS can inadvertently accommodate and process non-cognate amino acids such as alanine and cysteine, to avoid such errors it has two additional distinct editing activities against alanine. One activity is designated as 'pretransfer' editing and involves the tRNA(Pro)-independent hydrolysis of activated Ala-AMP. The other activity is designated 'posttransfer' editing and involves deacylation of mischarged Ala-tRNA(Pro). The misacylated Cys-tRNA(Pro) is not edited by ProRS. The polypeptide is Proline--tRNA ligase (Neisseria meningitidis serogroup A / serotype 4A (strain DSM 15465 / Z2491)).